The chain runs to 922 residues: uncharacterized protein (922 aa).

Disordered stretches follow at residues 459-522 (SLQD…QPKN), 539-627 (SNSA…SSLG), 649-668 (GFSS…RQPF), 692-835 (QKLD…VTSL), and 856-879 (PWRK…RPER). The span at 546–567 (KAKHSSNKPHKAASSRISKTKS) shows a compositional bias: basic residues. A compositionally biased stretch (basic and acidic residues) spans 582–600 (KKSEESKQSGKKVKVEEKQ). Over residues 651–660 (SSSRTLGSSS) the composition is skewed to low complexity. Residues 692–702 (QKLDGSAEKEC) show a composition bias toward basic and acidic residues. Polar residues-rich tracts occupy residues 755–779 (DSTN…SLTG) and 790–824 (KATQ…SSLQ). Positions 872–899 (TEEQRPEREAMKRKAQQERENAAKYTSL) form a coiled coil.

This is an uncharacterized protein from Homo sapiens (Human).